A 164-amino-acid polypeptide reads, in one-letter code: Transcription antitermination protein NusB (164 aa).

It belongs to the NusB family.

Its function is as follows. Involved in transcription antitermination. Required for transcription of ribosomal RNA (rRNA) genes. Binds specifically to the boxA antiterminator sequence of the ribosomal RNA (rrn) operons. This Chlamydia muridarum (strain MoPn / Nigg) protein is Transcription antitermination protein NusB.